The sequence spans 302 residues: uncharacterized protein (302 aa).

The next 10 helical transmembrane spans lie at 13–32 (GILLAISAYTMWGIAPIYFK), 42–64 (ILSHRVVWSFVLLAVLIHLGRRW), 77–96 (FWLLLVTALLVGGNWLIFIW), 106–125 (ASLGYYINPLLNVLLGMLFL), 132–150 (LQWFAVALAAIGVGIQLVV), 154–171 (VPIVAIALATSFGFYGLL), 183–202 (LFLETLFMLPAAAIYLIWLA), 217–239 (NLLLVCAGVVTTLPLLCFTGAAA), 246–265 (LGFFQYIGPSLMFLLAVLVY), and 275–297 (ITFAFIWSALVIFSVDGLKAGHA). In terms of domain architecture, EamA spans 22–149 (TMWGIAPIYF…AAIGVGIQLV (128 aa)).

It belongs to the EamA transporter family.

It localises to the cell membrane. This is an uncharacterized protein from Vibrio cholerae serotype O1 (strain ATCC 39315 / El Tor Inaba N16961).